A 173-amino-acid chain; its full sequence is 3-hydroxydecanoyl-[acyl-carrier-protein] dehydratase (173 aa).

Residue histidine 71 is part of the active site.

This sequence belongs to the thioester dehydratase family. FabA subfamily. In terms of assembly, homodimer.

Its subcellular location is the cytoplasm. It carries out the reaction a (3R)-hydroxyacyl-[ACP] = a (2E)-enoyl-[ACP] + H2O. It catalyses the reaction (3R)-hydroxydecanoyl-[ACP] = (2E)-decenoyl-[ACP] + H2O. The catalysed reaction is (2E)-decenoyl-[ACP] = (3Z)-decenoyl-[ACP]. It participates in lipid metabolism; fatty acid biosynthesis. Its function is as follows. Necessary for the introduction of cis unsaturation into fatty acids. Catalyzes the dehydration of (3R)-3-hydroxydecanoyl-ACP to E-(2)-decenoyl-ACP and then its isomerization to Z-(3)-decenoyl-ACP. Can catalyze the dehydratase reaction for beta-hydroxyacyl-ACPs with saturated chain lengths up to 16:0, being most active on intermediate chain length. The chain is 3-hydroxydecanoyl-[acyl-carrier-protein] dehydratase from Baumannia cicadellinicola subsp. Homalodisca coagulata.